A 535-amino-acid chain; its full sequence is CTP synthase (535 aa).

The segment at 1–267 is amidoligase domain; the sequence is MTKFIFVTGG…DDIVIQRLQL (267 aa). Serine 13 is a binding site for CTP. Serine 13 is a binding site for UTP. 14 to 19 lines the ATP pocket; sequence SLGKGI. Position 54 (tyrosine 54) interacts with L-glutamine. Residue aspartate 71 coordinates ATP. Residues aspartate 71 and glutamate 141 each coordinate Mg(2+). CTP-binding positions include 148 to 150, 188 to 193, and lysine 224; these read DIE and KTKPTQ. UTP-binding positions include 188-193 and lysine 224; that span reads KTKPTQ. 240–242 contacts ATP; that stretch reads RDA. Residues 293–535 form the Glutamine amidotransferase type-1 domain; the sequence is TIGLVGKYVS…VEAALNYQQK (243 aa). L-glutamine is bound at residue glycine 355. Cysteine 382 acts as the Nucleophile; for glutamine hydrolysis in catalysis. L-glutamine-binding positions include 383–386, glutamate 406, and arginine 463; that span reads LGMQ. Catalysis depends on residues histidine 508 and glutamate 510.

The protein belongs to the CTP synthase family. As to quaternary structure, homotetramer.

It catalyses the reaction UTP + L-glutamine + ATP + H2O = CTP + L-glutamate + ADP + phosphate + 2 H(+). The catalysed reaction is L-glutamine + H2O = L-glutamate + NH4(+). The enzyme catalyses UTP + NH4(+) + ATP = CTP + ADP + phosphate + 2 H(+). It participates in pyrimidine metabolism; CTP biosynthesis via de novo pathway; CTP from UDP: step 2/2. Allosterically activated by GTP, when glutamine is the substrate; GTP has no effect on the reaction when ammonia is the substrate. The allosteric effector GTP functions by stabilizing the protein conformation that binds the tetrahedral intermediate(s) formed during glutamine hydrolysis. Inhibited by the product CTP, via allosteric rather than competitive inhibition. Its function is as follows. Catalyzes the ATP-dependent amination of UTP to CTP with either L-glutamine or ammonia as the source of nitrogen. Regulates intracellular CTP levels through interactions with the four ribonucleotide triphosphates. The sequence is that of CTP synthase from Staphylococcus epidermidis (strain ATCC 35984 / DSM 28319 / BCRC 17069 / CCUG 31568 / BM 3577 / RP62A).